Reading from the N-terminus, the 467-residue chain is A-type ATP synthase subunit B (467 aa).

A disordered region spans residues 95-114 (GKGQPRDHMPLPPPEDFRDV).

The protein belongs to the ATPase alpha/beta chains family. As to quaternary structure, has multiple subunits with at least A(3), B(3), C, D, E, F, H, I and proteolipid K(x).

The protein resides in the cell membrane. Functionally, component of the A-type ATP synthase that produces ATP from ADP in the presence of a proton gradient across the membrane. The B chain is a regulatory subunit. In Pyrobaculum aerophilum (strain ATCC 51768 / DSM 7523 / JCM 9630 / CIP 104966 / NBRC 100827 / IM2), this protein is A-type ATP synthase subunit B.